We begin with the raw amino-acid sequence, 95 residues long: Small ribosomal subunit protein bS6 (95 aa).

The protein belongs to the bacterial ribosomal protein bS6 family.

Binds together with bS18 to 16S ribosomal RNA. The protein is Small ribosomal subunit protein bS6 of Corynebacterium efficiens (strain DSM 44549 / YS-314 / AJ 12310 / JCM 11189 / NBRC 100395).